Consider the following 688-residue polypeptide: Zinc finger and BTB domain-containing protein 48 (688 aa).

The BTB domain occupies 26–89 (CDATLDVGGL…FYTGHLALTS (64 aa)). The tract at residues 119–140 (SVGQAAGGQSGLGPPASQNVNS) is disordered. K143 participates in a covalent cross-link: Glycyl lysine isopeptide (Lys-Gly) (interchain with G-Cter in SUMO2). Positions 161 to 192 (PRDQEPRGSHSPQRPQLHSPAQSEGPSSLCGK) are disordered. A phosphoserine mark is found at S169, S171, and S179. Polar residues predominate over residues 170-186 (HSPQRPQLHSPAQSEGP). Residue K263 forms a Glycyl lysine isopeptide (Lys-Gly) (interchain with G-Cter in SUMO2) linkage. The C2H2-type 1 zinc-finger motif lies at 291–313 (VECPTCHKKFLSKYYLKVHNRKH). Zn(2+) is bound by residues C293, C296, H309, H313, C321, C324, H337, C342, C352, C355, H368, H372, C380, C383, H396, and H401. Residues 319-344 (FECPKCGKCYFRKENLLEHEARNCMN) form a CCHC-type zinc finger. C2H2-type zinc fingers lie at residues 350–372 (FTCSVCQETFRRRMELRVHMVSH), 378–401 (YKCSSCSQQFMQKKDLQSHMIKLH), 407–430 (HACPTCAKCFLSRTELQLHEAFKH), 436–459 (FVCEECGHRASSRNGLQMHIKAKH), 465–487 (HVCEFCSHAFTQKANLNMHLRTH), 493–515 (FQCHLCGKTFRTQASLDKHNRTH), 521–544 (FSCEFCEQRFTEKGPLLRHVASRH), 550–572 (HFCQICGKTFKAVEQLRVHVRRH), and 578–600 (FECTECGYKFTRQAHLRRHMEIH). The Zn(2+) site is built by C552, C555, H568, C580, C583, H596, and H600.

It belongs to the krueppel C2H2-type zinc-finger protein family. In terms of assembly, interacts with EP300. Detected in adrenal gland and neuroblastoma.

The protein localises to the nucleus. Its subcellular location is the chromosome. The protein resides in the telomere. Functionally, plays a critical role in transcriptional regulation and chromatin remodeling. Acts as a regulator of telomere length. Directly binds the telomeric double-stranded 5'-TTAGGG-3' repeat. Preferentially binds to telomeres that have a low concentration of shelterin complex and acts as a regulator of telomere length by initiating telomere trimming, a process that prevents the accumulation of aberrantly long telomeres. Also acts as a transcription regulator that binds to promoter regions. Regulates expression of a small subset of genes, including MTFP1. Acts as a negative regulator of cell proliferation by specifically activating expression of ARF, a tumor suppressor isoform of CDKN2A. Acts as a transcription regulator of CIITA, the major factor regulating MHC class II gene expression. In addition, regulates cellular m6A/m6Am methylation on RNA by facilitating the recruitment of the RNA demethylase, FTO, to target mRNAs. The chain is Zinc finger and BTB domain-containing protein 48 from Homo sapiens (Human).